We begin with the raw amino-acid sequence, 341 residues long: Anthranilate phosphoribosyltransferase (341 aa).

5-phospho-alpha-D-ribose 1-diphosphate-binding positions include G82, 85–86 (GD), T90, 92–95 (NIST), 110–118 (KHGNRAITS), and T122. Residue G82 coordinates anthranilate. Position 94 (S94) interacts with Mg(2+). Residue N113 participates in anthranilate binding. Anthranilate is bound at residue R168. Residues D226 and E227 each coordinate Mg(2+).

The protein belongs to the anthranilate phosphoribosyltransferase family. In terms of assembly, homodimer. Mg(2+) serves as cofactor.

It catalyses the reaction N-(5-phospho-beta-D-ribosyl)anthranilate + diphosphate = 5-phospho-alpha-D-ribose 1-diphosphate + anthranilate. It participates in amino-acid biosynthesis; L-tryptophan biosynthesis; L-tryptophan from chorismate: step 2/5. Functionally, catalyzes the transfer of the phosphoribosyl group of 5-phosphorylribose-1-pyrophosphate (PRPP) to anthranilate to yield N-(5'-phosphoribosyl)-anthranilate (PRA). The chain is Anthranilate phosphoribosyltransferase from Caulobacter vibrioides (strain ATCC 19089 / CIP 103742 / CB 15) (Caulobacter crescentus).